The chain runs to 658 residues: MWRNGIVYRAVKNFVRHNSTNNAAKNLKSIKVEDIQNRIENIPIENYRNFSIVAHIDHGKSTLSDRLLEITGVISKTEGTSGQRVLDKLEVEKERGITIKAQTCSMIYNDKRNGQDFLLHLIDTPGHVDFRDEVSRSYKACNGAILLVDASKGVQSQTVANFYLAYSMGLKLIPVINKIDLNVAEVEKTAGQIESTFEMSQDEIIKVSSKSGINIQEKLLPAVIDRIPPPTGIKNKPFRALLVDSWYDSYLGVVLLVHVVDGSIKKGDKISSAITQMKYEIKEIGIMHPDRVNTGKLTTGQVGYIVPGMKNSQDAKIGDTFMKVGLESQTEILPGFEETKPMVFVGAFPADGVEFKALDDDINRLVLNDKSVTIEMENSNALGQGWRLGFLGSLHASVFKERLEKEYGSQLIITQPTVPYLIEYEDGTIKEVTNPNEFPTNRKAKGVKSIANVQEPYVEAIMTLPDEYLGNVITLCDNHRGKQVEIKYMDSGQSNAIKQVMLRYEIPLFELVDNFFGRLKSVSQGYATLDYEDIGFRPSDIVKLELLINGTTIDAITSILHRSKVNKVGTEWVKNFKKYVKSQQYEVVIQARINNSKIIARETIKARRKDVLAKLHASDITRRKKLLVKQKEGKKKLKMRSIGNIQINTDAYQEFLRR.

The tr-type G domain maps to 45–231 (ENYRNFSIVA…AVIDRIPPPT (187 aa)). Residues 54 to 61 (AHIDHGKS), 123 to 127 (DTPGH), and 177 to 180 (NKID) contribute to the GTP site.

This sequence belongs to the TRAFAC class translation factor GTPase superfamily. Classic translation factor GTPase family. LepA subfamily.

Its subcellular location is the mitochondrion inner membrane. The enzyme catalyses GTP + H2O = GDP + phosphate + H(+). Promotes mitochondrial protein synthesis. May act as a fidelity factor of the translation reaction, by catalyzing a one-codon backward translocation of tRNAs on improperly translocated ribosomes. Binds to mitochondrial ribosomes in a GTP-dependent manner. The polypeptide is Translation factor GUF1, mitochondrial (Vanderwaltozyma polyspora (strain ATCC 22028 / DSM 70294 / BCRC 21397 / CBS 2163 / NBRC 10782 / NRRL Y-8283 / UCD 57-17) (Kluyveromyces polysporus)).